A 269-amino-acid polypeptide reads, in one-letter code: Formamidopyrimidine-DNA glycosylase (269 aa).

Pro-2 functions as the Schiff-base intermediate with DNA in the catalytic mechanism. The active-site Proton donor is the Glu-3. The Proton donor; for beta-elimination activity role is filled by Lys-57. Residues His-90, Arg-109, and Lys-150 each coordinate DNA. An FPG-type zinc finger spans residues 235 to 269; the sequence is QVYGKAGESCPECGEAIQELKIGQRNTFYCSYCQC. Catalysis depends on Arg-259, which acts as the Proton donor; for delta-elimination activity.

This sequence belongs to the FPG family. Monomer. Zn(2+) serves as cofactor.

The catalysed reaction is Hydrolysis of DNA containing ring-opened 7-methylguanine residues, releasing 2,6-diamino-4-hydroxy-5-(N-methyl)formamidopyrimidine.. It catalyses the reaction 2'-deoxyribonucleotide-(2'-deoxyribose 5'-phosphate)-2'-deoxyribonucleotide-DNA = a 3'-end 2'-deoxyribonucleotide-(2,3-dehydro-2,3-deoxyribose 5'-phosphate)-DNA + a 5'-end 5'-phospho-2'-deoxyribonucleoside-DNA + H(+). Its function is as follows. Involved in base excision repair of DNA damaged by oxidation or by mutagenic agents. Acts as a DNA glycosylase that recognizes and removes damaged bases. Has a preference for oxidized purines, such as 7,8-dihydro-8-oxoguanine (8-oxoG). Has AP (apurinic/apyrimidinic) lyase activity and introduces nicks in the DNA strand. Cleaves the DNA backbone by beta-delta elimination to generate a single-strand break at the site of the removed base with both 3'- and 5'-phosphates. This Vibrio vulnificus (strain YJ016) protein is Formamidopyrimidine-DNA glycosylase.